Consider the following 143-residue polypeptide: MAKKITGYIKLQVPAGKANPSPPIGPALGQRGLNIMEFCKAFNARTQGLEPGLPIPVVITAFADKSFTFIMKTPPATILIKKAAKITKGSPKPHTDKVGSITRAQVEEIAKTKMADLTAADMEAAVRTIAGSARSMGITVEGL.

It belongs to the universal ribosomal protein uL11 family. In terms of assembly, part of the ribosomal stalk of the 50S ribosomal subunit. Interacts with L10 and the large rRNA to form the base of the stalk. L10 forms an elongated spine to which L12 dimers bind in a sequential fashion forming a multimeric L10(L12)X complex. Post-translationally, one or more lysine residues are methylated.

In terms of biological role, forms part of the ribosomal stalk which helps the ribosome interact with GTP-bound translation factors. This is Large ribosomal subunit protein uL11 from Aromatoleum aromaticum (strain DSM 19018 / LMG 30748 / EbN1) (Azoarcus sp. (strain EbN1)).